The following is a 263-amino-acid chain: Acyl-[acyl-carrier-protein]--UDP-N-acetylglucosamine O-acyltransferase (263 aa).

This sequence belongs to the transferase hexapeptide repeat family. LpxA subfamily. Homotrimer.

Its subcellular location is the cytoplasm. The catalysed reaction is a (3R)-hydroxyacyl-[ACP] + UDP-N-acetyl-alpha-D-glucosamine = a UDP-3-O-[(3R)-3-hydroxyacyl]-N-acetyl-alpha-D-glucosamine + holo-[ACP]. The protein operates within glycolipid biosynthesis; lipid IV(A) biosynthesis; lipid IV(A) from (3R)-3-hydroxytetradecanoyl-[acyl-carrier-protein] and UDP-N-acetyl-alpha-D-glucosamine: step 1/6. In terms of biological role, involved in the biosynthesis of lipid A, a phosphorylated glycolipid that anchors the lipopolysaccharide to the outer membrane of the cell. This chain is Acyl-[acyl-carrier-protein]--UDP-N-acetylglucosamine O-acyltransferase, found in Xanthomonas campestris pv. campestris (strain 8004).